The following is a 97-amino-acid chain: Exodeoxyribonuclease 7 small subunit (97 aa).

The disordered stretch occupies residues 1 to 21 (MAKTATPGACASDPGSGPLPE).

This sequence belongs to the XseB family. As to quaternary structure, heterooligomer composed of large and small subunits.

It localises to the cytoplasm. It carries out the reaction Exonucleolytic cleavage in either 5'- to 3'- or 3'- to 5'-direction to yield nucleoside 5'-phosphates.. Its function is as follows. Bidirectionally degrades single-stranded DNA into large acid-insoluble oligonucleotides, which are then degraded further into small acid-soluble oligonucleotides. This Burkholderia mallei (strain NCTC 10247) protein is Exodeoxyribonuclease 7 small subunit.